A 225-amino-acid polypeptide reads, in one-letter code: MKKLLLIAATSATILSSSISFAECMDNEWYLRVDAGVAMFNKEKDKTIGVKLKSNKAMPIDLGIGYYIAENVRADLTLGTTIGGKLKKSGAATNAHFTGTNVLVSHKPIVTRLLINGYVDLTSFDMFDIFVGAGVGPALVKEKISGASGLASNTTNTKNKTNVSYKLIFGTAAQVADGVKVELAYSWIDDGRTKSKHVIHEGASVQTGGMRYQSHNITVGLRFGI.

The first 22 residues, 1–22 (MKKLLLIAATSATILSSSISFA), serve as a signal peptide directing secretion.

The chain is Putative adhesin RT0816 from Rickettsia typhi (strain ATCC VR-144 / Wilmington).